The primary structure comprises 214 residues: Charged multivesicular body protein 2b (214 aa).

A coiled-coil region spans residues 25-55 (QRTITRDRAALEKQERQLELEIKKMAKTGNK). The tract at residues 179-201 (AKAPSAARGLPSASTSKASTISD) is disordered. The span at 190-199 (SASTSKASTI) shows a compositional bias: polar residues. The short motif at 202-212 (EEIERQLKALG) is the MIT-interacting motif element.

This sequence belongs to the SNF7 family. As to quaternary structure, probable core component of the endosomal sorting required for transport complex III (ESCRT-III). ESCRT-III components are thought to multimerize to form a flat lattice on the perimeter membrane of the endosome.

It localises to the cytoplasm. Its subcellular location is the cytosol. The protein localises to the late endosome membrane. Functionally, probable core component of the endosomal sorting required for transport complex III (ESCRT-III) which is involved in multivesicular bodies (MVBs) formation and sorting of endosomal cargo proteins into MVBs. MVBs contain intraluminal vesicles (ILVs) that are generated by invagination and scission from the limiting membrane of the endosome and mostly are delivered to lysosomes enabling degradation of membrane proteins, such as stimulated growth factor receptors, lysosomal enzymes and lipids. This chain is Charged multivesicular body protein 2b (CHMP2B), found in Gallus gallus (Chicken).